The sequence spans 358 residues: Heavy metal-associated isoprenylated plant protein 37 (358 aa).

The 64-residue stretch at 12–75 (IQTFSLRVNI…KLVKAGKHAE (64 aa)) folds into the HMA domain. A metal cation is bound by residues C23 and C26. Disordered regions lie at residues 100 to 194 (QKGQ…QNTQ) and 332 to 358 (QQQSSHSHATNMSSEEDAGNNNSCNIM). The span at 128 to 141 (AEEDGDGSEEEDGD) shows a compositional bias: acidic residues. Residues 148 to 181 (ANQQQQQNVVNAKKNSGGAAMNNGNNGVNAASKK) are compositionally biased toward low complexity. Polar residues-rich tracts occupy residues 184-194 (QKQSNHNQNTQ) and 339-358 (HATNMSSEEDAGNNNSCNIM). C355 is subject to Cysteine methyl ester. Residue C355 is the site of S-farnesyl cysteine attachment. Residues 356-358 (NIM) constitute a propeptide, removed in mature form.

Belongs to the HIPP family.

In terms of biological role, heavy-metal-binding protein. This chain is Heavy metal-associated isoprenylated plant protein 37, found in Arabidopsis thaliana (Mouse-ear cress).